Consider the following 621-residue polypeptide: Chaperone protein HscA homolog (621 aa).

It belongs to the heat shock protein 70 family.

Functionally, chaperone involved in the maturation of iron-sulfur cluster-containing proteins. Has a low intrinsic ATPase activity which is markedly stimulated by HscB. The sequence is that of Chaperone protein HscA homolog from Cupriavidus taiwanensis (strain DSM 17343 / BCRC 17206 / CCUG 44338 / CIP 107171 / LMG 19424 / R1) (Ralstonia taiwanensis (strain LMG 19424)).